We begin with the raw amino-acid sequence, 650 residues long: DNA-directed RNA polymerase III subunit rpc3 (650 aa).

Disordered regions lie at residues 133 to 163, 264 to 283, 288 to 313, and 400 to 440; these read PTAV…EGHT, RGAK…KKAR, AVDE…NIPM, and LAGS…SSDG. Acidic residues predominate over residues 149–158; the sequence is GEGVEGEGIE. Acidic residues predominate over residues 288–307; sequence AVDEDEEEEEENEWSEDEMG. Residues 577–598 form a leucine-zipper region; that stretch reads TYKSMSRCLQRLRFERNRLKEF.

This sequence belongs to the RNA polymerase beta chain family. In terms of assembly, component of the RNA polymerase III (Pol III) complex consisting of 17 subunits.

The protein localises to the nucleus. Functionally, DNA-dependent RNA polymerase catalyzes the transcription of DNA into RNA using the four ribonucleoside triphosphates as substrates. Specific core component of RNA polymerase III which synthesizes small RNAs, such as 5S rRNA and tRNAs. The sequence is that of DNA-directed RNA polymerase III subunit rpc3 (rpc82) from Aspergillus terreus (strain NIH 2624 / FGSC A1156).